A 141-amino-acid polypeptide reads, in one-letter code: Transmembrane protein 216 (141 aa).

4 helical membrane-spanning segments follow: residues 15–35 (VLFFLNGWYYATYFLLELLIF), 49–69 (LVLDVVMLLLYLGIEVIRLFF), 82–102 (LGISVALTFPSAMMASYYLLL), and 115–135 (SILLFFCGSELLLEMLTLATF).

In terms of assembly, part of the tectonic-like complex (also named B9 complex). Interacts with TMEM107.

It is found in the membrane. The protein resides in the cytoplasm. It localises to the cytoskeleton. Its subcellular location is the cilium basal body. In terms of biological role, part of the tectonic-like complex which is required for tissue-specific ciliogenesis and may regulate ciliary membrane composition. The chain is Transmembrane protein 216 (Tmem216) from Mus musculus (Mouse).